Here is a 348-residue protein sequence, read N- to C-terminus: NADH-quinone oxidoreductase subunit H (348 aa).

8 consecutive transmembrane segments (helical) span residues 10–30 (LPLF…LVLI), 82–102 (GVFL…WAVV), 115–135 (VGLL…IMGG), 161–181 (IGFV…TTIV), 199–219 (LLDW…ISAL), 251–271 (LFFL…TILF), 287–307 (VPGV…FAMV), and 322–342 (LGWK…AAIL).

Belongs to the complex I subunit 1 family. In terms of assembly, NDH-1 is composed of 14 different subunits. Subunits NuoA, H, J, K, L, M, N constitute the membrane sector of the complex.

The protein localises to the cell inner membrane. The enzyme catalyses a quinone + NADH + 5 H(+)(in) = a quinol + NAD(+) + 4 H(+)(out). Functionally, NDH-1 shuttles electrons from NADH, via FMN and iron-sulfur (Fe-S) centers, to quinones in the respiratory chain. The immediate electron acceptor for the enzyme in this species is believed to be ubiquinone. Couples the redox reaction to proton translocation (for every two electrons transferred, four hydrogen ions are translocated across the cytoplasmic membrane), and thus conserves the redox energy in a proton gradient. This subunit may bind ubiquinone. The chain is NADH-quinone oxidoreductase subunit H from Bartonella bacilliformis (strain ATCC 35685 / KC583 / Herrer 020/F12,63).